The chain runs to 84 residues: MAKQVKRKRRPQIKINTFCRFTAAGITRIDYKDVDTLLKNINESGKITPSRMTGTSAKFQRQLTTAIKRARFLALIPYTDKHKK.

It belongs to the bacterial ribosomal protein bS18 family. In terms of assembly, part of the 30S ribosomal subunit. Forms a tight heterodimer with protein bS6.

Its function is as follows. Binds as a heterodimer with protein bS6 to the central domain of the 16S rRNA, where it helps stabilize the platform of the 30S subunit. This Ruthia magnifica subsp. Calyptogena magnifica protein is Small ribosomal subunit protein bS18.